The chain runs to 513 residues: ATP synthase subunit alpha 1 (513 aa).

169-176 (GDRQTGKT) lines the ATP pocket.

Belongs to the ATPase alpha/beta chains family. In terms of assembly, F-type ATPases have 2 components, CF(1) - the catalytic core - and CF(0) - the membrane proton channel. CF(1) has five subunits: alpha(3), beta(3), gamma(1), delta(1), epsilon(1). CF(0) has three main subunits: a(1), b(2) and c(9-12). The alpha and beta chains form an alternating ring which encloses part of the gamma chain. CF(1) is attached to CF(0) by a central stalk formed by the gamma and epsilon chains, while a peripheral stalk is formed by the delta and b chains.

It is found in the cell inner membrane. The enzyme catalyses ATP + H2O + 4 H(+)(in) = ADP + phosphate + 5 H(+)(out). Produces ATP from ADP in the presence of a proton gradient across the membrane. The alpha chain is a regulatory subunit. The protein is ATP synthase subunit alpha 1 of Photobacterium profundum (strain SS9).